A 125-amino-acid polypeptide reads, in one-letter code: Cytochrome c oxidase assembly factor 6 homolog (125 aa).

Position 2 is an N-acetylalanine (Gly-2). Residues 55-98 (RQVCWGARDEYWKCLDENLEDASQCKKLRSSFESSCPQQWIKYF) form the CHCH domain. The Cx9C motif signature appears at 58–68 (CWGARDEYWKC). 2 disulfides stabilise this stretch: Cys-58–Cys-90 and Cys-68–Cys-79. The Cx10C motif signature appears at 79-90 (CKKLRSSFESSC).

It belongs to the cytochrome c oxidase subunit 6B family. Interacts with COA1. Found in a complex with TMEM177, COX20, MT-CO2/COX2, COX18, SCO1 and SCO2. Interacts with MT-CO2/COX2 and SCO2. Interacts with SCO1. Interacts with COX20 in a MT-CO2/COX2- and COX18-dependent manner. Interacts with COX16.

The protein localises to the mitochondrion intermembrane space. Functionally, involved in the maturation of the mitochondrial respiratory chain complex IV subunit MT-CO2/COX2. Thereby, may regulate early steps of complex IV assembly. Mitochondrial respiratory chain complex IV or cytochrome c oxidase is the component of the respiratory chain that catalyzes the transfer of electrons from intermembrane space cytochrome c to molecular oxygen in the matrix and as a consequence contributes to the proton gradient involved in mitochondrial ATP synthesis. May also be required for efficient formation of respiratory supercomplexes comprised of complexes III and IV. The polypeptide is Cytochrome c oxidase assembly factor 6 homolog (COA6) (Homo sapiens (Human)).